Here is a 448-residue protein sequence, read N- to C-terminus: Mitochondrial distribution and morphology protein 10 (448 aa).

This sequence belongs to the MDM10 family. Component of the ER-mitochondria encounter structure (ERMES) or MDM complex, composed of MMM1, MDM10, MDM12 and MDM34. Associates with the mitochondrial outer membrane sorting assembly machinery SAM(core) complex.

It is found in the mitochondrion outer membrane. Its function is as follows. Component of the ERMES/MDM complex, which serves as a molecular tether to connect the endoplasmic reticulum and mitochondria. Components of this complex are involved in the control of mitochondrial shape and protein biogenesis and may function in phospholipid exchange. MDM10 is involved in the late assembly steps of the general translocase of the mitochondrial outer membrane (TOM complex). Functions in the TOM40-specific route of the assembly of outer membrane beta-barrel proteins, including the association of TOM40 with the receptor TOM22 and small TOM proteins. Can associate with the SAM(core) complex as well as the MDM12-MMM1 complex, both involved in late steps of the major beta-barrel assembly pathway, that is responsible for biogenesis of all outer membrane beta-barrel proteins. May act as a switch that shuttles between both complexes and channels precursor proteins into the TOM40-specific pathway. Plays a role in mitochondrial morphology and in the inheritance of mitochondria. This chain is Mitochondrial distribution and morphology protein 10, found in Zygosaccharomyces rouxii (strain ATCC 2623 / CBS 732 / NBRC 1130 / NCYC 568 / NRRL Y-229).